Consider the following 823-residue polypeptide: Putative ankyrin repeat domain-containing protein 20A3 (823 aa).

ANK repeat units lie at residues 66–95 (QHRT…QIDV), 99–128 (ENRT…NPNL), 132–161 (YGNT…HIEA), 165–194 (DNNT…SSHA), and 198–227 (LRRS…DVFA). Disordered stretches follow at residues 301–343 (VPEK…EVED) and 355–402 (VQTL…LSEN). Positions 372–384 (QERHERSEKKQPQ) are enriched in basic and acidic residues. 3 coiled-coil regions span residues 431-480 (KKLK…KQLE), 571-724 (AFRY…NNST), and 776-805 (LVLE…EKTE).

This Homo sapiens (Human) protein is Putative ankyrin repeat domain-containing protein 20A3.